Reading from the N-terminus, the 459-residue chain is Serine protease HTRA3 (459 aa).

Residues 1–23 (MQARALLPATLAILATLAVLALA) form the signal peptide. The IGFBP N-terminal domain maps to 27-90 (PAAPCPARCD…ECVRGVCRCR (64 aa)). 8 cysteine pairs are disulfide-bonded: C31–C54, C35–C56, C40–C57, C45–C60, C68–C82, C76–C87, C89–C107, and C96–C132. Residues 76–134 (CGDSLECVRGVCRCRWTHTVCGTDGHTYADVCALQAASRRALQVSGTPVRQLQKGACPS) enclose the Kazal-like domain. Residues 181-347 (GSGFIMSEAG…IPSDRITRFL (167 aa)) form a serine protease region. Catalysis depends on charge relay system residues H197, D233, and S311. Positions 365–450 (IRMRTITPSL…EVRRGNDDLL (86 aa)) constitute a PDZ domain.

The protein belongs to the peptidase S1C family. Homotrimer. Interacts with MYH9. Interacts with TGFB1; the interaction inhibits TGFB-mediated signaling. Interacts with BMP4; the interaction inhibits BMP4-mediated signaling. Interacts with TGFB2 and GDF5. In terms of tissue distribution, highest level of isoform 1 in maternal part of the placenta, moderate level in heart, testis and ovary, low level in muscle and lung. High expression found in granulosa cells of the ovary. Expressed in bone matrix, particularly in articular chondrocytes. Very low level of isoform 2 expressed in placenta. Expressed in the bone matrix, particularly in articular chondrocytes.

The protein localises to the secreted. In terms of biological role, serine protease that cleaves beta-casein/CSN2 as well as several extracellular matrix (ECM) proteoglycans such as decorin/DCN, biglycan/BGN and fibronectin/FN1. Inhibits signaling mediated by TGF-beta family proteins possibly indirectly by degradation of these ECM proteoglycans. May act as a tumor suppressor. Negatively regulates, in vitro, trophoblast invasion during placental development and may be involved in the development of the placenta in vivo. May also have a role in ovarian development, granulosa cell differentiation and luteinization. This chain is Serine protease HTRA3 (Htra3), found in Mus musculus (Mouse).